The primary structure comprises 160 residues: N-acetyltransferase Pat (160 aa).

The region spanning 5-148 is the N-acetyltransferase domain; that stretch reads IKIRKATKED…VYGEMRLTER (144 aa). Residues leucine 79, valine 81, threonine 87, glycine 89, glycine 91, threonine 92, asparagine 118, lysine 123, and lysine 127 each contribute to the CoA site.

This sequence belongs to the acetyltransferase family. GNAT subfamily.

It carries out the reaction L-lysyl-[protein] + acetyl-CoA = N(6)-acetyl-L-lysyl-[protein] + CoA + H(+). Modulates activity of albA1, the major archaeal DNA compaction protein, by decreasing albA1's nucleic acid binding affinity through acetylation of 'Lys-16'. This is N-acetyltransferase Pat from Saccharolobus solfataricus (strain ATCC 35092 / DSM 1617 / JCM 11322 / P2) (Sulfolobus solfataricus).